Reading from the N-terminus, the 296-residue chain is Homoserine kinase (296 aa).

84-94 provides a ligand contact to ATP; it reads PLARGLGSSSS.

It belongs to the GHMP kinase family. Homoserine kinase subfamily.

The protein localises to the cytoplasm. It catalyses the reaction L-homoserine + ATP = O-phospho-L-homoserine + ADP + H(+). Its pathway is amino-acid biosynthesis; L-threonine biosynthesis; L-threonine from L-aspartate: step 4/5. Catalyzes the ATP-dependent phosphorylation of L-homoserine to L-homoserine phosphate. This is Homoserine kinase from Lactococcus lactis subsp. cremoris (strain SK11).